The chain runs to 360 residues: Nicotinate-nucleotide--dimethylbenzimidazole phosphoribosyltransferase (360 aa).

The active-site Proton acceptor is the glutamate 327.

It belongs to the CobT family.

The enzyme catalyses 5,6-dimethylbenzimidazole + nicotinate beta-D-ribonucleotide = alpha-ribazole 5'-phosphate + nicotinate + H(+). The protein operates within nucleoside biosynthesis; alpha-ribazole biosynthesis; alpha-ribazole from 5,6-dimethylbenzimidazole: step 1/2. In terms of biological role, catalyzes the synthesis of alpha-ribazole-5'-phosphate from nicotinate mononucleotide (NAMN) and 5,6-dimethylbenzimidazole (DMB). The sequence is that of Nicotinate-nucleotide--dimethylbenzimidazole phosphoribosyltransferase from Shewanella baltica (strain OS185).